We begin with the raw amino-acid sequence, 256 residues long: Trypsin, alkaline B (256 aa).

The first 17 residues, 1-17 (MRLFLALLALGFAAVAA), serve as a signal peptide directing secretion. Positions 18 to 24 (VPANPQR) are cleaved as a propeptide — activation peptide. One can recognise a Peptidase S1 domain in the interval 25–256 (IVGGSTTTIQ…RFANWIRNNS (232 aa)). Residues Cys-55 and Cys-71 are joined by a disulfide bond. Catalysis depends on charge relay system residues His-70 and Asp-115. Cystine bridges form between Cys-180–Cys-197 and Cys-209–Cys-233. Residue Ser-213 is the Charge relay system of the active site.

The protein belongs to the peptidase S1 family. As to expression, midgut.

The protein resides in the secreted. Its subcellular location is the extracellular space. It catalyses the reaction Preferential cleavage: Arg-|-Xaa, Lys-|-Xaa.. This Manduca sexta (Tobacco hawkmoth) protein is Trypsin, alkaline B.